The chain runs to 122 residues: Large ribosomal subunit protein bL12 (122 aa).

The protein belongs to the bacterial ribosomal protein bL12 family. Homodimer. Part of the ribosomal stalk of the 50S ribosomal subunit. Forms a multimeric L10(L12)X complex, where L10 forms an elongated spine to which 2 to 4 L12 dimers bind in a sequential fashion. Binds GTP-bound translation factors.

Forms part of the ribosomal stalk which helps the ribosome interact with GTP-bound translation factors. Is thus essential for accurate translation. This is Large ribosomal subunit protein bL12 from Yersinia pseudotuberculosis serotype O:1b (strain IP 31758).